The sequence spans 143 residues: Transcriptional regulator MraZ (143 aa).

2 consecutive SpoVT-AbrB domains span residues 5–47 (SHTP…PMAE) and 76–119 (AADD…DAQR).

Belongs to the MraZ family. In terms of assembly, forms oligomers.

The protein localises to the cytoplasm. Its subcellular location is the nucleoid. This Frankia alni (strain DSM 45986 / CECT 9034 / ACN14a) protein is Transcriptional regulator MraZ.